Here is a 237-residue protein sequence, read N- to C-terminus: Putative N-acetylmannosamine-6-phosphate 2-epimerase (237 aa).

This sequence belongs to the NanE family.

It catalyses the reaction an N-acyl-D-glucosamine 6-phosphate = an N-acyl-D-mannosamine 6-phosphate. Its pathway is amino-sugar metabolism; N-acetylneuraminate degradation; D-fructose 6-phosphate from N-acetylneuraminate: step 3/5. In terms of biological role, converts N-acetylmannosamine-6-phosphate (ManNAc-6-P) to N-acetylglucosamine-6-phosphate (GlcNAc-6-P). The polypeptide is Putative N-acetylmannosamine-6-phosphate 2-epimerase (Listeria monocytogenes serovar 1/2a (strain ATCC BAA-679 / EGD-e)).